The following is a 358-amino-acid chain: MKIMISGGGTGGHIYPALALIETLKKRHPDLQVQYIGTENGLEADLVPRAGVPFKSIQIAGLKRSLSLENVKTAYWFLKAVRALKKDMAAFKPDVVIGTGGFVSGPVVYTAQQLGIPTILHEQNSIPGLTNKFLSKKADRVALSFKGSDVHFPGANVRLIGNPRGSEVLQTEVDEASVREQYRLDDRPIVLVYGGSRGAEAINRAVVEAIPSLSELPINVLYVTGKVHFDAVSKQAPSSDNVHIHPYVYDMPSLLACTSLVISRAGASTISELTALGLPSILVPSPYVTADHQTKNASALVENGAALLVKEEALTGVTLVEAIRQALEQRDEMANASRALGFPDASDALADLVEEVIQ.

UDP-N-acetyl-alpha-D-glucosamine-binding positions include 10-12 (TGG), N124, S196, and Q293.

This sequence belongs to the glycosyltransferase 28 family. MurG subfamily.

The protein localises to the cell membrane. It catalyses the reaction di-trans,octa-cis-undecaprenyl diphospho-N-acetyl-alpha-D-muramoyl-L-alanyl-D-glutamyl-meso-2,6-diaminopimeloyl-D-alanyl-D-alanine + UDP-N-acetyl-alpha-D-glucosamine = di-trans,octa-cis-undecaprenyl diphospho-[N-acetyl-alpha-D-glucosaminyl-(1-&gt;4)]-N-acetyl-alpha-D-muramoyl-L-alanyl-D-glutamyl-meso-2,6-diaminopimeloyl-D-alanyl-D-alanine + UDP + H(+). It functions in the pathway cell wall biogenesis; peptidoglycan biosynthesis. Functionally, cell wall formation. Catalyzes the transfer of a GlcNAc subunit on undecaprenyl-pyrophosphoryl-MurNAc-pentapeptide (lipid intermediate I) to form undecaprenyl-pyrophosphoryl-MurNAc-(pentapeptide)GlcNAc (lipid intermediate II). The sequence is that of UDP-N-acetylglucosamine--N-acetylmuramyl-(pentapeptide) pyrophosphoryl-undecaprenol N-acetylglucosamine transferase from Exiguobacterium sp. (strain ATCC BAA-1283 / AT1b).